Consider the following 394-residue polypeptide: Elongation factor Tu (394 aa).

Residues 10 to 204 (KPHVNVGTIG…YLDSYIPEPE (195 aa)) form the tr-type G domain. A G1 region spans residues 19–26 (GHVDHGKT). 19–26 (GHVDHGKT) is a binding site for GTP. Residue threonine 26 coordinates Mg(2+). The G2 stretch occupies residues 60 to 64 (GITIN). A G3 region spans residues 81-84 (DCPG). Residues 81–85 (DCPGH) and 136–139 (NKCD) each bind GTP. Residues 136 to 139 (NKCD) form a G4 region. The interval 174 to 176 (SAL) is G5.

Belongs to the TRAFAC class translation factor GTPase superfamily. Classic translation factor GTPase family. EF-Tu/EF-1A subfamily. Monomer.

It localises to the cytoplasm. It catalyses the reaction GTP + H2O = GDP + phosphate + H(+). GTP hydrolase that promotes the GTP-dependent binding of aminoacyl-tRNA to the A-site of ribosomes during protein biosynthesis. The sequence is that of Elongation factor Tu from Pectobacterium atrosepticum (strain SCRI 1043 / ATCC BAA-672) (Erwinia carotovora subsp. atroseptica).